The following is a 1827-amino-acid chain: Sucrase-isomaltase, intestinal (1827 aa).

The Cytoplasmic segment spans residues 2–12; the sequence is AKRKFSGLEIT. Ser7 carries the post-translational modification Phosphoserine; by PKA. A helical; Signal-anchor for type II membrane protein transmembrane segment spans residues 13 to 32; that stretch reads LIVLFVIVFIIAIALIAVLA. The Lumenal segment spans residues 33–1827; that stretch reads TKTPAVEEVN…LDDPIEISWS (1795 aa). The tract at residues 39–64 is disordered; sequence EEVNPSSSTPTTTSTTTSTSGSVSCP. Over residues 43–64 the composition is skewed to low complexity; the sequence is PSSSTPTTTSTTTSTSGSVSCP. A P-type 1 domain is found at 61–110; the sequence is VSCPSELNEVVNERINCIPEQSPTQAICAQRNCCWRPWNNSDIPWCFFVD. Cystine bridges form between Cys63/Cys94, Cys77/Cys93, and Cys88/Cys106. Residue Asn99 is glycosylated (N-linked (GlcNAc...) asparagine). Residues 110–1007 are isomaltase; it reads DNHGYNVEGM…DLQLNPTRTR (898 aa). Substrate is bound by residues Asp264 and Asp388. Sulfotyrosine is present on residues Tyr391 and Tyr400. Asn455 is a glycosylation site (N-linked (GlcNAc...) asparagine). Residue Asp505 is the Nucleophile; for isomaltase activity of the active site. Cys520 and Cys545 are disulfide-bonded. Arg588 provides a ligand contact to substrate. The active-site For isomaltase activity is Asp604. The cysteines at positions 635 and 646 are disulfide-linked. Position 662 (His662) interacts with substrate. N-linked (GlcNAc...) asparagine glycosylation is found at Asn859, Asn896, and Asn904. Residues 932-978 enclose the P-type 2 domain; sequence DQTFLESEKITCYPDADIATQEKCTQRGCIWDTNTVNPRAPECYFPK. The sucrase stretch occupies residues 1008–1827; it reads ITLPSEPITN…LDDPIEISWS (820 aa). N-linked (GlcNAc...) asparagine glycosylation is found at Asn1235, Asn1303, Asn1325, Asn1340, Asn1354, and Asn1368. Tyr1382 and Tyr1385 each carry sulfotyrosine. Asp1394 acts as the Nucleophile; for sucrase activity in catalysis. Residue Glu1397 is the For sucrase activity of the active site. The N-linked (GlcNAc...) asparagine glycan is linked to Asn1403. Asp1500 serves as the catalytic Proton donor; for sucrase activity. N-linked (GlcNAc...) asparagine glycosylation is found at Asn1535, Asn1572, Asn1748, Asn1763, and Asn1799.

The protein belongs to the glycosyl hydrolase 31 family. In terms of assembly, the resulting sucrase and isomaltase subunits stay associated with one another in a complex by non-covalent linkages. Post-translationally, the precursor is proteolytically cleaved when exposed to pancreatic proteases in the intestinal lumen. N- and O-glycosylated. In terms of processing, sulfated.

Its subcellular location is the apical cell membrane. The enzyme catalyses Hydrolysis of sucrose and maltose by an alpha-D-glucosidase-type action.. The catalysed reaction is Hydrolysis of (1-&gt;6)-alpha-D-glucosidic linkages in some oligosaccharides produced from starch and glycogen by alpha-amylase, and in isomaltose.. Its function is as follows. Plays an important role in the final stage of carbohydrate digestion. Isomaltase activity is specific for both alpha-1,4- and alpha-1,6-oligosaccharides. This Oryctolagus cuniculus (Rabbit) protein is Sucrase-isomaltase, intestinal (SI).